The following is a 110-amino-acid chain: NADH-quinone oxidoreductase subunit K (110 aa).

The next 3 helical transmembrane spans lie at 14–34 (VSQY…GMMV), 39–59 (ITIL…FVGI), and 70–90 (IFAL…LGII).

This sequence belongs to the complex I subunit 4L family. In terms of assembly, NDH-1 is composed of 14 different subunits. Subunits NuoA, H, J, K, L, M, N constitute the membrane sector of the complex.

The protein localises to the cell inner membrane. It catalyses the reaction a quinone + NADH + 5 H(+)(in) = a quinol + NAD(+) + 4 H(+)(out). Its function is as follows. NDH-1 shuttles electrons from NADH, via FMN and iron-sulfur (Fe-S) centers, to quinones in the respiratory chain. The immediate electron acceptor for the enzyme in this species is believed to be ubiquinone. Couples the redox reaction to proton translocation (for every two electrons transferred, four hydrogen ions are translocated across the cytoplasmic membrane), and thus conserves the redox energy in a proton gradient. The sequence is that of NADH-quinone oxidoreductase subunit K from Hydrogenobaculum sp. (strain Y04AAS1).